Here is a 201-residue protein sequence, read N- to C-terminus: NADH-quinone oxidoreductase subunit C (201 aa).

It belongs to the complex I 30 kDa subunit family. In terms of assembly, NDH-1 is composed of 14 different subunits. Subunits NuoB, C, D, E, F, and G constitute the peripheral sector of the complex.

Its subcellular location is the cell inner membrane. It carries out the reaction a quinone + NADH + 5 H(+)(in) = a quinol + NAD(+) + 4 H(+)(out). In terms of biological role, NDH-1 shuttles electrons from NADH, via FMN and iron-sulfur (Fe-S) centers, to quinones in the respiratory chain. The immediate electron acceptor for the enzyme in this species is believed to be ubiquinone. Couples the redox reaction to proton translocation (for every two electrons transferred, four hydrogen ions are translocated across the cytoplasmic membrane), and thus conserves the redox energy in a proton gradient. This chain is NADH-quinone oxidoreductase subunit C, found in Dechloromonas aromatica (strain RCB).